We begin with the raw amino-acid sequence, 273 residues long: MSRVVSLLLGAALLCGHGAFCRRVVSGQKVCFADFKHPCYKMAYFHELSSRVSFQEARLACESEGGVLLSLENEAEQKLIESMLQNLTKPGTGISDGDFWIGLWRNGDGQTSGACPDLYQWSDGSNSQYRNWYTDEPSCGSEKCVVMYHQPTANPGLGGPYLYQWNDDRCNMKHNYICKYEPEINPTAPVEKPYLTNQPGDTHQNVVVTEAGIIPNLIYVVIPTIPLLLLILVAFGTCCFQMLHKSKGRTKTSPNQSTLWISKSTRKESGMEV.

The signal sequence occupies residues 1-21 (MSRVVSLLLGAALLCGHGAFC). Residues 22-216 (RRVVSGQKVC…VVTEAGIIPN (195 aa)) lie on the Extracellular side of the membrane. The C-type lectin domain occupies 35–179 (FKHPCYKMAY…CNMKHNYICK (145 aa)). Intrachain disulfides connect Cys-61–Cys-178 and Cys-144–Cys-170. N-linked (GlcNAc...) asparagine glycosylation is present at Asn-86. Residues 217-237 (LIYVVIPTIPLLLLILVAFGT) traverse the membrane as a helical segment. Residues 238–273 (CCFQMLHKSKGRTKTSPNQSTLWISKSTRKESGMEV) lie on the Cytoplasmic side of the membrane. Residues 248–273 (GRTKTSPNQSTLWISKSTRKESGMEV) form a disordered region. A compositionally biased stretch (polar residues) spans 251 to 263 (KTSPNQSTLWISK).

Interacts with RABGGTB. N-glycosylated. Found in spleen, testis, prostate and fetal liver. Expression limited to vascular muscle of testis, smooth muscle of prostate stroma, heart muscle, skeletal muscle, crypts of small intestine, and red pulp of spleen. B lymphocytes express isoform 2 only; peripheral blood T lymphocytes express isoform 3 only; granulocytes and monocytes express neither isoform 2 nor isoform 3. During development of T lymphocytes, bone marrow progenitor cells express isoform 2 only; thymocytes at different stages of maturation express predominantly isoform 2 and weakly isoform 3, and mature thymocytes express only isoform 2.

It localises to the cytoplasm. The protein resides in the membrane. Its subcellular location is the endoplasmic reticulum. It is found in the endoplasmic reticulum membrane. In terms of biological role, may play a role in the development of the nervous system such as in neurite outgrowth and elongation. May be involved in motor axon growth and guidance. The polypeptide is Chondrolectin (CHODL) (Homo sapiens (Human)).